Reading from the N-terminus, the 271-residue chain is Probable short-chain type dehydrogenase/reductase VdlC (271 aa).

Residue 1-25 (MAVITGASSGIGLECVLMLLNQGYK) participates in NAD(+) binding. Serine 129 serves as a coordination point for substrate. Tyrosine 142 (proton acceptor) is an active-site residue.

The protein belongs to the short-chain dehydrogenases/reductases (SDR) family.

This chain is Probable short-chain type dehydrogenase/reductase VdlC (vdlC), found in Helicobacter pylori (strain J99 / ATCC 700824) (Campylobacter pylori J99).